A 266-amino-acid chain; its full sequence is 4-hydroxy-tetrahydrodipicolinate reductase (266 aa).

11–16 lines the NAD(+) pocket; that stretch reads GALGKM. K39 provides a ligand contact to NADP(+). 100–102 lines the NAD(+) pocket; it reads GTT. The active-site Proton donor/acceptor is the H156. H157 lines the (S)-2,3,4,5-tetrahydrodipicolinate pocket. K160 acts as the Proton donor in catalysis. A (S)-2,3,4,5-tetrahydrodipicolinate-binding site is contributed by 166–167; that stretch reads GT.

It belongs to the DapB family.

It is found in the cytoplasm. The enzyme catalyses (S)-2,3,4,5-tetrahydrodipicolinate + NAD(+) + H2O = (2S,4S)-4-hydroxy-2,3,4,5-tetrahydrodipicolinate + NADH + H(+). It carries out the reaction (S)-2,3,4,5-tetrahydrodipicolinate + NADP(+) + H2O = (2S,4S)-4-hydroxy-2,3,4,5-tetrahydrodipicolinate + NADPH + H(+). It functions in the pathway amino-acid biosynthesis; L-lysine biosynthesis via DAP pathway; (S)-tetrahydrodipicolinate from L-aspartate: step 4/4. Its function is as follows. Catalyzes the conversion of 4-hydroxy-tetrahydrodipicolinate (HTPA) to tetrahydrodipicolinate. The protein is 4-hydroxy-tetrahydrodipicolinate reductase of Syntrophomonas wolfei subsp. wolfei (strain DSM 2245B / Goettingen).